Consider the following 395-residue polypeptide: Cation channel sperm-associated protein 3 (395 aa).

The Cytoplasmic segment spans residues 1–48 (MSQHFHHNPVRVKSGSLFATASEALQARLSKIKRKDKECQAYFRKVIK). The chain crosses the membrane as a helical span at residues 49–71 (STFFQIVMITTVTTNSFLLVLGT). The Extracellular portion of the chain corresponds to 72–80 (NYDIQFEFF). A helical transmembrane segment spans residues 81–107 (RTFEVSELFFVSVYVCEFLMKVYVDPI). Position 108 (Thr108) is a topological domain, cytoplasmic. A helical transmembrane segment spans residues 109-131 (YWKDGYNILDVIILIILTIPYLL). Over 132–143 (RKIKGNHSAYLH) the chain is Extracellular. Residues 144–160 (FADGIQSLRILKLISYS) form a helical membrane-spanning segment. Over 161 to 168 (RGIRTLII) the chain is Cytoplasmic. A helical transmembrane segment spans residues 169-195 (AVGETVYTVASVLTLLFLLMFVFAILG). Residues 196–216 (FCLFGVTDRGDLENWGNLASA) are Extracellular-facing. Residues 217 to 236 (FFTLFSLATVDGWTDLQEEL) constitute an intramembrane region (helical; Pore-forming). Residues 237-242 (DKRKFT) are Extracellular-facing. Residues 243–268 (VSRAFTILFILLASFIFLNMFVGVMI) traverse the membrane as a helical segment. The Cytoplasmic segment spans residues 269–395 (MHTEDSMKKF…ESSSSLSGLS (127 aa)).

Belongs to the cation channel sperm-associated (TC 1.A.1.19) family. Component of the CatSper complex or CatSpermasome composed of the core pore-forming members CATSPER1, CATSPER2, CATSPER3 and CATSPER4 as well as auxiliary members CATSPERB, CATSPERG2, CATSPERD, CATSPERE, CATSPERZ, C2CD6/CATSPERT, SLCO6C1, TMEM249, TMEM262 and EFCAB9. HSPA1 may be an additional auxiliary complex member. The core complex members CATSPER1, CATSPER2, CATSPER3 and CATSPER4 form a heterotetrameric channel. The auxiliary CATSPERB, CATSPERG2, CATSPERD and CATSPERE subunits form a pavilion-like structure over the pore which stabilizes the complex through interactions with CATSPER4, CATSPER3, CATSPER1 and CATSPER2 respectively. SLCO6C1 interacts with CATSPERE and TMEM262/CATSPERH interacts with CATSPERB, further stabilizing the complex. C2CD6/CATSPERT interacts at least with CATSPERD and is required for targeting the CatSper complex in the flagellar membrane. Testis-specific.

It localises to the cell projection. It is found in the cilium. The protein localises to the flagellum membrane. It catalyses the reaction Ca(2+)(in) = Ca(2+)(out). In contrast to the human ortholog, not activated by progesterone. Activated by intracellular alkalinization. Functionally, pore-forming subunit of the CatSper complex, a sperm-specific voltage-gated calcium channel that plays a central role in sperm cell hyperactivation. Controls calcium entry to mediate the hyperactivated motility, a step needed for sperm motility which is essential late in the preparation of sperm for fertilization. In Mus musculus (Mouse), this protein is Cation channel sperm-associated protein 3 (Catsper3).